The chain runs to 784 residues: Kinesin-like protein 6 (784 aa).

A Kinesin motor domain is found at 6-389 (SISVAVRVRP…LKYGNRAKNI (384 aa)). 134 to 141 (GATGCGKT) provides a ligand contact to ATP. Coiled coils occupy residues 405–440 (SEYV…EVRK) and 463–483 (RDLQ…EDEI). The disordered stretch occupies residues 677-715 (SEVPTTSSVPPVEIKNKDSKPKVEKSLDKHNMNNDRSFL). Residues 690 to 709 (IKNKDSKPKVEKSLDKHNMN) show a composition bias toward basic and acidic residues.

It belongs to the TRAFAC class myosin-kinesin ATPase superfamily. Kinesin family. Kinesin II subfamily. As to quaternary structure, heterodimer with klp5.

The protein localises to the cytoplasm. It localises to the cytoskeleton. It is found in the chromosome. Its subcellular location is the centromere. The protein resides in the kinetochore. The protein localises to the spindle. In terms of biological role, has a role in establishing metaphase during mitosis. Required for chromosome segregation where it generates tension during kinetochore capturing. This chain is Kinesin-like protein 6 (klp6), found in Schizosaccharomyces pombe (strain 972 / ATCC 24843) (Fission yeast).